Consider the following 163-residue polypeptide: Peptidyl-prolyl cis-trans isomerase (163 aa).

Residues 17–163 (KTAYATIKTN…IESVVFSSSL (147 aa)) enclose the PPIase cyclophilin-type domain.

The protein belongs to the cyclophilin-type PPIase family.

It catalyses the reaction [protein]-peptidylproline (omega=180) = [protein]-peptidylproline (omega=0). PPIases accelerate the folding of proteins. It catalyzes the cis-trans isomerization of proline imidic peptide bonds in oligopeptides. The polypeptide is Peptidyl-prolyl cis-trans isomerase (ppiA) (Helicobacter pylori (strain ATCC 700392 / 26695) (Campylobacter pylori)).